The primary structure comprises 254 residues: Splicing factor tls1 (254 aa).

Residues 69 to 83 (KEKQLNTANEPHEAN) are compositionally biased toward basic and acidic residues. Disordered regions lie at residues 69–90 (KEKQLNTANEPHEANDQTSAQS) and 195–216 (RKRQKKRARMKEKLDSKALRTS). Basic residues predominate over residues 195–204 (RKRQKKRARM). The span at 205–216 (KEKLDSKALRTS) shows a compositional bias: basic and acidic residues.

This sequence belongs to the TLS1 family. Component of the spliceosome. Interacts with brr2.

The protein localises to the cytoplasm. Its subcellular location is the nucleus. Functionally, plays a role in pre-mRNA splicing by facilitating excision of introns featuring long spacing between the branchpoint and 3'-splice site. Assists the splicing of several components involved in chromatin organization, such as several shelterin complex subunits. The polypeptide is Splicing factor tls1 (Schizosaccharomyces pombe (strain 972 / ATCC 24843) (Fission yeast)).